Consider the following 599-residue polypeptide: ATP-dependent zinc metalloprotease FtsH 3 (599 aa).

Over 1 to 7 (MKYKKKN) the chain is Cytoplasmic. Residues 8-28 (ILFITTIIVIYLAFLFNWLEI) form a helical membrane-spanning segment. The Extracellular segment spans residues 29-128 (GIFKPKGESI…PFSWLLSIFS (100 aa)). Residues 129–149 (ILLNFINVLSSLVFTIYIFLA) traverse the membrane as a helical segment. The Cytoplasmic portion of the chain corresponds to 150 to 599 (IHRESGKLNS…IEQLVVNTKK (450 aa)). 214-221 (GPPGTGKT) lines the ATP pocket. H436 provides a ligand contact to Zn(2+). The active site involves E437. H440 and D512 together coordinate Zn(2+).

The protein in the central section; belongs to the AAA ATPase family. This sequence in the C-terminal section; belongs to the peptidase M41 family. Homohexamer. It depends on Zn(2+) as a cofactor.

The protein localises to the cell membrane. Acts as a processive, ATP-dependent zinc metallopeptidase for both cytoplasmic and membrane proteins. Plays a role in the quality control of integral membrane proteins. This is ATP-dependent zinc metalloprotease FtsH 3 from Phytoplasma mali (strain AT).